We begin with the raw amino-acid sequence, 623 residues long: Flap endonuclease 1 (623 aa).

The N-domain stretch occupies residues 1–106 (MGIKGLTKFI…SELEKRGEKR (106 aa)). Mg(2+) is bound at residue Asp34. Positions 47 and 72 each coordinate DNA. Mg(2+)-binding residues include Asp88, Glu160, Glu162, Asp181, and Asp183. The tract at residues 124–267 (EIKKQSGRTV…KTAYNLIKEY (144 aa)) is I-domain. Residue Glu160 coordinates DNA. DNA contacts are provided by Gly245 and Asp247. Asp247 contributes to the Mg(2+) binding site. The segment at 350–358 (TQRRLDNFF) is interaction with PCNA. A disordered region spans residues 368-517 (LVIEESQSQS…LSSNSTLHSC (150 aa)). Composition is skewed to basic and acidic residues over residues 410–424 (TKVEKEPKREKKDEE) and 466–482 (QKSDSESGNVKKEKTEQ). Over residues 502 to 517 (AGSNTHLSSNSTLHSC) the composition is skewed to polar residues.

Belongs to the XPG/RAD2 endonuclease family. FEN1 subfamily. In terms of assembly, interacts with PCNA. Three molecules of FEN1 bind to one PCNA trimer with each molecule binding to one PCNA monomer. PCNA stimulates the nuclease activity without altering cleavage specificity. It depends on Mg(2+) as a cofactor. In terms of processing, phosphorylated. Phosphorylation upon DNA damage induces relocalization to the nuclear plasma.

The protein localises to the nucleus. Its subcellular location is the nucleolus. The protein resides in the nucleoplasm. It localises to the mitochondrion. Its function is as follows. Structure-specific nuclease with 5'-flap endonuclease and 5'-3' exonuclease activities involved in DNA replication and repair. During DNA replication, cleaves the 5'-overhanging flap structure that is generated by displacement synthesis when DNA polymerase encounters the 5'-end of a downstream Okazaki fragment. It enters the flap from the 5'-end and then tracks to cleave the flap base, leaving a nick for ligation. Also involved in the long patch base excision repair (LP-BER) pathway, by cleaving within the apurinic/apyrimidinic (AP) site-terminated flap. Acts as a genome stabilization factor that prevents flaps from equilibrating into structures that lead to duplications and deletions. Also possesses 5'-3' exonuclease activity on nicked or gapped double-stranded DNA, and exhibits RNase H activity. Also involved in replication and repair of rDNA and in repairing mitochondrial DNA. The sequence is that of Flap endonuclease 1 from Plasmodium vivax (strain Salvador I).